We begin with the raw amino-acid sequence, 118 residues long: Crustacean hyperglycemic hormones 2 (118 aa).

A signal peptide spans 1 to 22 (MTAFRLVAVALVVVVACSTTWA). Cystine bridges form between C51/C87, C67/C83, and C70/C96. V116 is subject to Valine amide.

It belongs to the arthropod CHH/MIH/GIH/VIH hormone family.

Its subcellular location is the secreted. Hormone found in the sinus gland of isopods and decapods which controls the blood sugar level. Has a secretagogue action over the amylase released from the midgut gland. May act as a stress hormone and may be involved in the control of molting and reproduction. The sequence is that of Crustacean hyperglycemic hormones 2 (CHH2) from Penaeus monodon (Giant tiger prawn).